A 161-amino-acid chain; its full sequence is UPF0303 protein Spro_1996 (161 aa).

Belongs to the UPF0303 family.

The sequence is that of UPF0303 protein Spro_1996 from Serratia proteamaculans (strain 568).